A 472-amino-acid polypeptide reads, in one-letter code: Inhibitor of Apoptosis OPG037 (472 aa).

ANK repeat units lie at residues 97-126 (DGNY…DPNA), 130-161 (HNKT…KINN), 233-263 (DGNT…DVNK), 267-297 (FGDS…VITD), 322-351 (YDST…ICED), and 353-377 (MYYA…SVDF).

This sequence belongs to the orthopoxvirus OPG037 protein family. As to quaternary structure, may interact with host caspase-9-Apaf-1 complex.

The protein resides in the host cytoplasm. In terms of biological role, inhibits host apoptosis. Acts by associating with host apoptosome. The chain is Inhibitor of Apoptosis OPG037 (OPG037) from Vaccinia virus (strain Western Reserve) (VACV).